We begin with the raw amino-acid sequence, 161 residues long: Protein-export protein SecB (161 aa).

The protein belongs to the SecB family. In terms of assembly, homotetramer, a dimer of dimers. One homotetramer interacts with 1 SecA dimer.

The protein localises to the cytoplasm. Functionally, one of the proteins required for the normal export of preproteins out of the cell cytoplasm. It is a molecular chaperone that binds to a subset of precursor proteins, maintaining them in a translocation-competent state. It also specifically binds to its receptor SecA. The chain is Protein-export protein SecB from Shewanella baltica (strain OS223).